The following is a 162-amino-acid chain: Precorrin-2 dehydrogenase (162 aa).

NAD(+) is bound by residues Ser20 to Ile21 and Pro41 to Asp42.

Belongs to the precorrin-2 dehydrogenase / sirohydrochlorin ferrochelatase family.

The catalysed reaction is precorrin-2 + NAD(+) = sirohydrochlorin + NADH + 2 H(+). It participates in cofactor biosynthesis; adenosylcobalamin biosynthesis; sirohydrochlorin from precorrin-2: step 1/1. It functions in the pathway porphyrin-containing compound metabolism; siroheme biosynthesis; sirohydrochlorin from precorrin-2: step 1/1. Catalyzes the dehydrogenation of precorrin-2 to form sirohydrochlorin which is used as a precursor in both siroheme biosynthesis and in the anaerobic branch of adenosylcobalamin biosynthesis. In Bacillus subtilis (strain 168), this protein is Precorrin-2 dehydrogenase (sirC).